Consider the following 655-residue polypeptide: Probable alpha-galactosidase D (655 aa).

The first 16 residues, 1-16, serve as a signal peptide directing secretion; that stretch reads MASVIALSLLLPAAFA. Asn-87 and Asn-93 each carry an N-linked (GlcNAc...) asparagine glycan. A disulfide bond links Cys-126 and Cys-153. Asp-151 acts as the Nucleophile in catalysis. 196 to 200 lines the substrate pocket; it reads EWGID. Asp-218 functions as the Proton donor in the catalytic mechanism. N-linked (GlcNAc...) asparagine glycans are attached at residues Asn-432, Asn-482, Asn-502, Asn-540, and Asn-579.

It belongs to the glycosyl hydrolase 27 family.

The protein resides in the secreted. The enzyme catalyses Hydrolysis of terminal, non-reducing alpha-D-galactose residues in alpha-D-galactosides, including galactose oligosaccharides, galactomannans and galactolipids.. In terms of biological role, hydrolyzes a variety of simple alpha-D-galactoside as well as more complex molecules such as oligosaccharides and polysaccharides. The polypeptide is Probable alpha-galactosidase D (aglD) (Aspergillus terreus (strain NIH 2624 / FGSC A1156)).